The following is a 325-amino-acid chain: Biotin synthase (325 aa).

Positions Asn46–Asn270 constitute a Radical SAM core domain. The [4Fe-4S] cluster site is built by Cys64, Cys68, and Cys71. [2Fe-2S] cluster-binding residues include Ser107, Cys139, Cys198, and Arg274.

Belongs to the radical SAM superfamily. Biotin synthase family. As to quaternary structure, homodimer. It depends on [4Fe-4S] cluster as a cofactor. [2Fe-2S] cluster serves as cofactor.

The enzyme catalyses (4R,5S)-dethiobiotin + (sulfur carrier)-SH + 2 reduced [2Fe-2S]-[ferredoxin] + 2 S-adenosyl-L-methionine = (sulfur carrier)-H + biotin + 2 5'-deoxyadenosine + 2 L-methionine + 2 oxidized [2Fe-2S]-[ferredoxin]. Its pathway is cofactor biosynthesis; biotin biosynthesis; biotin from 7,8-diaminononanoate: step 2/2. Its function is as follows. Catalyzes the conversion of dethiobiotin (DTB) to biotin by the insertion of a sulfur atom into dethiobiotin via a radical-based mechanism. This chain is Biotin synthase, found in Methanococcus aeolicus (strain ATCC BAA-1280 / DSM 17508 / OCM 812 / Nankai-3).